The following is a 457-amino-acid chain: Tubulin gamma-2 chain (457 aa).

Position 142-148 (142-148 (AGGTGSG)) interacts with GTP.

This sequence belongs to the tubulin family. As to quaternary structure, interacts with Ote. Expressed in nurse cells and oocytes of developing egg chambers.

It is found in the cytoplasm. The protein resides in the cytoskeleton. It localises to the microtubule organizing center. Its subcellular location is the centrosome. The protein localises to the spindle. Functionally, tubulin is the major constituent of microtubules. The gamma chain is found at microtubule organizing centers (MTOC) such as the spindle poles or the centrosome, suggesting that it is involved in the minus-end nucleation of microtubule assembly. Required for oocyte activation and consequently for organization of the female meiotic spindle. Essential for centrosome organization and assembly of biastral mitotic spindles in embryos. Plays a role in stabilizing the augmin complex on the meiotic spindle. The sequence is that of Tubulin gamma-2 chain (gammaTub37C) from Drosophila melanogaster (Fruit fly).